Reading from the N-terminus, the 431-residue chain is Asparagine--tRNA ligase (431 aa).

Belongs to the class-II aminoacyl-tRNA synthetase family.

The protein localises to the cytoplasm. It carries out the reaction tRNA(Asn) + L-asparagine + ATP = L-asparaginyl-tRNA(Asn) + AMP + diphosphate + H(+). In Thermococcus kodakarensis (strain ATCC BAA-918 / JCM 12380 / KOD1) (Pyrococcus kodakaraensis (strain KOD1)), this protein is Asparagine--tRNA ligase.